We begin with the raw amino-acid sequence, 529 residues long: MQPPRPVRRALLSVSDKTGILAFARSLSERGVELLSTGGTARLLAEAGLPVTEVSDYTGFPEMMDGRVKTLHPKVHGGILGRRDIDDAIMREHDIAPIDMVVVNLYPFAATVARAECTREEAVENIDIGGPTMVRSAAKNHKDVAIVVNSANYPAVVAEMDQHSGSLTLETRFDLAIKAFEHTAAYDSMIANYFGSQVPAYHGDAKQPSGRFPRTLNLNFIKKQDMRYGENSHQMAAFYTDPETPEASVATAQQLQGKALSYNNIADTDAALECVKTFTEAACVIVKHANPCGVATSDTLLAAYNRAYQTDPTSAFGGIIAFNRPLDADTAKAIVSRQFVEVIIAPAVDDDALGVLAGKQNVRVLACGNLQQPSPGLDFKRVNGGLLVQERDVGMVDLQDLSVVTERQPTEEEMRDALFCWKVAKFVKSNAIVYARYQRTIGIGAGQMSRVYSAKIAGIKAADEGLDVKGSAMASDAFFPFRDGIDAAAAVGVRCVIQPGGSIHDNEIIAAANEHGIAMIFTHMRHFRH.

Residues 1-148 (MQPPRPVRRA…KNHKDVAIVV (148 aa)) enclose the MGS-like domain.

It belongs to the PurH family.

The catalysed reaction is (6R)-10-formyltetrahydrofolate + 5-amino-1-(5-phospho-beta-D-ribosyl)imidazole-4-carboxamide = 5-formamido-1-(5-phospho-D-ribosyl)imidazole-4-carboxamide + (6S)-5,6,7,8-tetrahydrofolate. It carries out the reaction IMP + H2O = 5-formamido-1-(5-phospho-D-ribosyl)imidazole-4-carboxamide. It functions in the pathway purine metabolism; IMP biosynthesis via de novo pathway; 5-formamido-1-(5-phospho-D-ribosyl)imidazole-4-carboxamide from 5-amino-1-(5-phospho-D-ribosyl)imidazole-4-carboxamide (10-formyl THF route): step 1/1. It participates in purine metabolism; IMP biosynthesis via de novo pathway; IMP from 5-formamido-1-(5-phospho-D-ribosyl)imidazole-4-carboxamide: step 1/1. This is Bifunctional purine biosynthesis protein PurH from Sodalis glossinidius (strain morsitans).